We begin with the raw amino-acid sequence, 185 residues long: Ribosome-recycling factor (185 aa).

It belongs to the RRF family.

The protein localises to the cytoplasm. Its function is as follows. Responsible for the release of ribosomes from messenger RNA at the termination of protein biosynthesis. May increase the efficiency of translation by recycling ribosomes from one round of translation to another. The chain is Ribosome-recycling factor from Pasteurella multocida (strain Pm70).